The following is a 70-amino-acid chain: DNA-directed RNA polymerase subunit omega (70 aa).

Belongs to the RNA polymerase subunit omega family. The RNAP catalytic core consists of 2 alpha, 1 beta, 1 beta' and 1 omega subunit. When a sigma factor is associated with the core the holoenzyme is formed, which can initiate transcription.

The catalysed reaction is RNA(n) + a ribonucleoside 5'-triphosphate = RNA(n+1) + diphosphate. Its function is as follows. Promotes RNA polymerase assembly. Latches the N- and C-terminal regions of the beta' subunit thereby facilitating its interaction with the beta and alpha subunits. The polypeptide is DNA-directed RNA polymerase subunit omega (Methylobacillus flagellatus (strain ATCC 51484 / DSM 6875 / VKM B-1610 / KT)).